Here is a 147-residue protein sequence, read N- to C-terminus: Large ribosomal subunit protein bL9 (147 aa).

Belongs to the bacterial ribosomal protein bL9 family.

In terms of biological role, binds to the 23S rRNA. The polypeptide is Large ribosomal subunit protein bL9 (Mycoplasmoides gallisepticum (strain R(low / passage 15 / clone 2)) (Mycoplasma gallisepticum)).